A 292-amino-acid chain; its full sequence is 4-hydroxy-tetrahydrodipicolinate synthase 2 (292 aa).

Thr46 serves as a coordination point for pyruvate. The Proton donor/acceptor role is filled by Tyr134. Lys162 serves as the catalytic Schiff-base intermediate with substrate. Val204 provides a ligand contact to pyruvate.

Belongs to the DapA family. Homotetramer; dimer of dimers.

It is found in the cytoplasm. The enzyme catalyses L-aspartate 4-semialdehyde + pyruvate = (2S,4S)-4-hydroxy-2,3,4,5-tetrahydrodipicolinate + H2O + H(+). It participates in amino-acid biosynthesis; L-lysine biosynthesis via DAP pathway; (S)-tetrahydrodipicolinate from L-aspartate: step 3/4. In terms of biological role, catalyzes the condensation of (S)-aspartate-beta-semialdehyde [(S)-ASA] and pyruvate to 4-hydroxy-tetrahydrodipicolinate (HTPA). This chain is 4-hydroxy-tetrahydrodipicolinate synthase 2, found in Halalkalibacterium halodurans (strain ATCC BAA-125 / DSM 18197 / FERM 7344 / JCM 9153 / C-125) (Bacillus halodurans).